Here is a 207-residue protein sequence, read N- to C-terminus: MARYRGPVVKIMRREGVDLFLKSSYTFNKDKFHRKGPPGMPTKRKGKVSEYGAQLREKQKLKRAYGLLEKQFRRYYEEASHAHGVTGEILLQLLERRLDNVVYRLGFAITRRQARNFIAHRHILVNGERVDIPSYRLNVGDKVEIREKFKTSSFIADNIKLSQSLQGIPSWLSADYTNFGGDVTALPERHHIDLPVKEQVIVELYSK.

The S4 RNA-binding domain maps to 96–156; sequence RRLDNVVYRL…EKFKTSSFIA (61 aa).

This sequence belongs to the universal ribosomal protein uS4 family. Part of the 30S ribosomal subunit. Contacts protein S5. The interaction surface between S4 and S5 is involved in control of translational fidelity.

In terms of biological role, one of the primary rRNA binding proteins, it binds directly to 16S rRNA where it nucleates assembly of the body of the 30S subunit. With S5 and S12 plays an important role in translational accuracy. The protein is Small ribosomal subunit protein uS4 of Leptospira interrogans serogroup Icterohaemorrhagiae serovar copenhageni (strain Fiocruz L1-130).